The sequence spans 332 residues: DGAT1/2-independent enzyme synthesizing storage lipids (332 aa).

Residues 1-10 lie on the Lumenal side of the membrane; it reads MIGSNESSTE. N-linked (GlcNAc...) asparagine glycosylation is present at Asn5. The chain crosses the membrane as a helical span at residues 11–31; it reads GPIPTSYLSFLAYLLGEWTGV. Residues 32–45 lie on the Cytoplasmic side of the membrane; the sequence is EHTEDYLSYGAYLS. The chain crosses the membrane as a helical span at residues 46–66; sequence WVLFPLAIVFILPVAIFFFCF. Residues 67–332 are Lumenal-facing; it reads NTSLLLLHIY…ERFQTRQKED (266 aa). The active site involves His132. Asn289 carries N-linked (GlcNAc...) asparagine glycosylation.

The protein belongs to the diacylglycerol acyltransferase family. Highly divergent.

The protein resides in the endoplasmic reticulum membrane. It carries out the reaction a 1,2-diacylglycerol + a 1,2-diacyl-sn-glycero-3-phosphocholine = a triacylglycerol + a 1-acyl-sn-glycero-3-phosphocholine. The enzyme catalyses a 1-O-alkyl-2-acyl-sn-glycero-3-phosphocholine + a 1,2-diacylglycerol = a 1-O-alkyl-sn-glycero-3-phosphocholine + a triacylglycerol. It catalyses the reaction a 2-acylglycerol + an acyl-CoA = a 1,2-diacylglycerol + CoA. The catalysed reaction is an acyl-CoA + a 1,2-diacyl-sn-glycerol = a triacyl-sn-glycerol + CoA. It carries out the reaction 2-(9Z-octadecenoyl)-glycerol + (9Z)-octadecenoyl-CoA = 1,2-di-(9Z-octadecenoyl)-glycerol + CoA. The enzyme catalyses 1,2-di-(9Z-octadecenoyl)-sn-glycerol + (9Z)-octadecenoyl-CoA = 1,2,3-tri-(9Z-octadecenoyl)-glycerol + CoA. Catalytic subunit of the alternative triglyceride biosynthesis pathway, which mediates formation of triacylglycerol from diacylglycerol and membrane phospholipids. Synthesizes triacylglycerol at the expense of membrane phospholipids, such as phosphatidylcholine (PC) and its ether-linked form (ePC), thereby altering the composition of membranes. The alternative triglyceride biosynthesis pathway is probably required to provide the energy required for rapid growth when fuel sources are limiting. It maintains mitochondrial function during periods of extracellular lipid starvation. Can also use acyl-CoA as donor: acts as a acyl-CoA:monoacylglycerol acyltransferase (MGAT), but also shows acyl-CoA:diacylglycerol acyltransferase (DGAT) activity. This is DGAT1/2-independent enzyme synthesizing storage lipids (TMEM68) from Gallus gallus (Chicken).